The sequence spans 421 residues: MFTRNMTIADYDPVLWQAIQDENRRQEEHIELIASENYASPRVMEAQGSQFTNKYAEGYPGKRYYGGCEYADIVEQLAIDRAKELFGADYVNVQPHSGSQANAAVYGALINAGDTILGMDLAHGGHLTHGAKVSFSGKIYNSVLYGITADGLIDYEDVRQKALECKPKLIVAGFSAYSQVVDWAKMREIADEVGAYLFVDMAHVAGLIAAGLYPNPLPHAHVVTTTTHKTLGGPRGGLILSSCGDEEIYKKLQSSVFPANQGGPLVHIIAAKAVCFKEALEPQYKEYQANVIKNAKAMVEVFKQRGYDVVSNGTENHLFLVSFIKQGLTGKAADAALGKANITVNKNAVPNDPQKPFVTSGIRVGTPSVTRRGFNENDVRELAGWMCDVLDALGKENEEQVIAETKEKVLAICKRLPVYPK.

Residues L121 and G125–L127 contribute to the (6S)-5,6,7,8-tetrahydrofolate site. An N6-(pyridoxal phosphate)lysine modification is found at K229.

Belongs to the SHMT family. Homodimer. It depends on pyridoxal 5'-phosphate as a cofactor.

It localises to the cytoplasm. It catalyses the reaction (6R)-5,10-methylene-5,6,7,8-tetrahydrofolate + glycine + H2O = (6S)-5,6,7,8-tetrahydrofolate + L-serine. Its pathway is one-carbon metabolism; tetrahydrofolate interconversion. The protein operates within amino-acid biosynthesis; glycine biosynthesis; glycine from L-serine: step 1/1. Its function is as follows. Catalyzes the reversible interconversion of serine and glycine with tetrahydrofolate (THF) serving as the one-carbon carrier. This reaction serves as the major source of one-carbon groups required for the biosynthesis of purines, thymidylate, methionine, and other important biomolecules. Also exhibits THF-independent aldolase activity toward beta-hydroxyamino acids, producing glycine and aldehydes, via a retro-aldol mechanism. The sequence is that of Serine hydroxymethyltransferase from Haemophilus influenzae (strain PittGG).